Reading from the N-terminus, the 329-residue chain is Endonuclease 8-like 2 (329 aa).

Residue P2 is the Schiff-base intermediate with DNA of the active site. The active-site Proton donor is E3. The Proton donor; for beta-elimination activity role is filled by K50. The residue at position 50 (K50) is an N6-acetyllysine. Residue S68 is modified to Phosphoserine. The tract at residues 68-116 is disordered; it reads SLLSEPLREGEQKDKARHHQEASDPSSWSPGGDSAVPSGDDGLQCLGGD. Basic and acidic residues predominate over residues 73 to 89; that stretch reads PLREGEQKDKARHHQEA. Residues 90-102 show a composition bias toward low complexity; the sequence is SDPSSWSPGGDSA. K149 is modified (N6-acetyllysine). A DNA-binding site is contributed by N227. The segment at 280–316 adopts an FPG-type zinc-finger fold; the sequence is QIYQKEQCPAGHQVVRESLGPPGGFQRLTWWCPQCQP. R306 acts as the Proton donor; for delta-elimination activity in catalysis.

It belongs to the FPG family. Binds EP300.

Its subcellular location is the nucleus. The enzyme catalyses 2'-deoxyribonucleotide-(2'-deoxyribose 5'-phosphate)-2'-deoxyribonucleotide-DNA = a 3'-end 2'-deoxyribonucleotide-(2,3-dehydro-2,3-deoxyribose 5'-phosphate)-DNA + a 5'-end 5'-phospho-2'-deoxyribonucleoside-DNA + H(+). Acetylation of Lys-50 leads to loss of DNA nicking activity. In terms of biological role, involved in base excision repair of DNA damaged by oxidation or by mutagenic agents. Has DNA glycosylase activity towards 5-hydroxyuracil and other oxidized derivatives of cytosine with a preference for mismatched double-stranded DNA (DNA bubbles). Has low or no DNA glycosylase activity towards thymine glycol, 2-hydroxyadenine, hypoxanthine and 8-oxoguanine. Has AP (apurinic/apyrimidinic) lyase activity and introduces nicks in the DNA strand. Cleaves the DNA backbone by beta-delta elimination to generate a single-strand break at the site of the removed base with both 3'- and 5'-phosphates. This Bos taurus (Bovine) protein is Endonuclease 8-like 2 (NEIL2).